Here is a 283-residue protein sequence, read N- to C-terminus: Non-selective voltage-gated ion channel VDAC3 (283 aa).

C2 is modified (N-acetylcysteine). T4 carries the post-translational modification Phosphothreonine. An N6-acetyllysine mark is found at K12, K15, and K20. 2 consecutive transmembrane segments (beta stranded) span residues 26 to 35 and 39 to 47; these read MVKIDLRTKS and VEFSTSGHA. K53 is covalently cross-linked (Glycyl lysine isopeptide (Lys-Gly) (interchain with G-Cter in ubiquitin)). Beta stranded transmembrane passes span 54-64, 69-76, and 80-89; these read ASGNLETKYKI, LTFTQKWN, and TLGTEISLEN. At K90 the chain carries N6-acetyllysine. Residues 95–104 form a beta stranded membrane-spanning segment; the sequence is LKLTLDTIFV. Residues K109 and K110 each participate in a glycyl lysine isopeptide (Lys-Gly) (interchain with G-Cter in ubiquitin) cross-link. 10 beta stranded membrane passes run 111-120, 123-130, 137-145, 150-158, 163-175, 178-185, 189-198, 202-211, 218-227, and 231-238; these read SGKLKASYKR, FSIGSNVD, TIYGWAVLA, LAGYQMSFD, KLSQ…GYKA, FQLHTHVN, EFGGSIYQKV, IETSINLAWT, RFGIAAKYKL, and TSLSAKVN. S241 is subject to Phosphoserine. Residues 242-244 and 260-264 each bind NAD(+); these read LIG and SALID. The next 2 membrane-spanning stretches (beta stranded) occupy residues 242 to 251 and 254 to 263; these read LIGLGYTQTL and GVKLTLSALI. K266 is modified (N6-acetyllysine; alternate). K266 is covalently cross-linked (Glycyl lysine isopeptide (Lys-Gly) (interchain with G-Cter in ubiquitin); alternate). The chain crosses the membrane as a beta stranded span at residues 273-282; sequence HKVGLGFELE.

It belongs to the eukaryotic mitochondrial porin family. In terms of assembly, interacts with ARMC12 in a TBC1D21-dependent manner. Interacts with MISFA. In terms of processing, ubiquitinated by PRKN during mitophagy, leading to its degradation and enhancement of mitophagy. Deubiquitinated by USP30.

Its subcellular location is the mitochondrion outer membrane. The protein localises to the membrane. It carries out the reaction chloride(in) = chloride(out). The catalysed reaction is K(+)(in) = K(+)(out). Functionally, non-selective voltage-gated ion channel that mediates the transport of anions and cations through the mitochondrion outer membrane and plasma membrane. Forms a high-conducting channel with a stable open state and a voltage-induced closure with a mild preference for anions over cations. Involved in male fertility and sperm mitochondrial sheath formation. The polypeptide is Non-selective voltage-gated ion channel VDAC3 (Sus scrofa (Pig)).